Reading from the N-terminus, the 311-residue chain is p-hydroxybenzoic acid efflux pump subunit AaeA (311 aa).

The helical transmembrane segment at 11–31 (IAITLILVLLGIIAIFKAWVF) threads the bilayer.

The protein belongs to the membrane fusion protein (MFP) (TC 8.A.1) family.

The protein localises to the cell inner membrane. In terms of biological role, forms an efflux pump with AaeB. In Serratia proteamaculans (strain 568), this protein is p-hydroxybenzoic acid efflux pump subunit AaeA.